Here is a 332-residue protein sequence, read N- to C-terminus: Adenosine receptor A2b (332 aa).

The Extracellular segment spans residues 1-8; the sequence is MLLETQDA. A helical membrane pass occupies residues 9 to 33; sequence LYVALELVIAALSVAGNVLVCAAVG. Over 34–43 the chain is Cytoplasmic; sequence TANTLQTPTN. Residues 44–67 traverse the membrane as a helical segment; sequence YFLVSLAAADVAVGLFAIPFAITI. Over 68-78 the chain is Extracellular; the sequence is SLGFCTDFYGC. An intrachain disulfide couples Cys-78 to Cys-171. Residues 79-101 traverse the membrane as a helical segment; it reads LFLACFVLVLTQSSIFSLLAVAV. Over 102 to 121 the chain is Cytoplasmic; sequence DRYLAICVPLRYKSLVTGTR. The chain crosses the membrane as a helical span at residues 122 to 144; it reads ARGVIAVLWVLAFGIGLTPFLGW. Residues 145–178 are Extracellular-facing; sequence NSKDSATNNCTEPWDGTTNESCCLVKCLFENVVP. Asn-153 and Asn-163 each carry an N-linked (GlcNAc...) asparagine glycan. Residue Glu-174 participates in adenosine binding. A helical transmembrane segment spans residues 179–203; that stretch reads MSYMVYFNFFGCVLPPLLIMLVIYI. At 204–235 the chain is on the cytoplasmic side; sequence KIFLVACRQLQRTELMDHSRTTLQREIHAAKS. Residues 236–259 traverse the membrane as a helical segment; sequence LAMIVGIFALCWLPVHAVNCVTLF. Residue Asn-254 participates in adenosine binding. The Extracellular portion of the chain corresponds to 260-267; the sequence is QPAQGKNK. Residues 268-291 traverse the membrane as a helical segment; that stretch reads PKWAMNMAILLSHANSVVNPIVYA. Ser-279 and His-280 together coordinate adenosine. Residues 292-332 lie on the Cytoplasmic side of the membrane; it reads YRNRDFRYTFHKIISRYLLCQADVKSGNGQAGVQPALGVGL. A lipid anchor (S-palmitoyl cysteine) is attached at Cys-311.

It belongs to the G-protein coupled receptor 1 family.

It is found in the cell membrane. Functionally, receptor for adenosine. The activity of this receptor is mediated by G proteins which activate adenylyl cyclase. This is Adenosine receptor A2b (ADORA2B) from Homo sapiens (Human).